Consider the following 296-residue polypeptide: D-alanine--D-alanine ligase (296 aa).

The ATP-grasp domain maps to Thr-99–Gln-292. Residue Gly-125 to Thr-176 coordinates ATP. Residues Asp-247, Glu-259, and Asn-261 each contribute to the Mg(2+) site.

Belongs to the D-alanine--D-alanine ligase family. Mg(2+) serves as cofactor. Requires Mn(2+) as cofactor.

The protein localises to the cytoplasm. The catalysed reaction is 2 D-alanine + ATP = D-alanyl-D-alanine + ADP + phosphate + H(+). It participates in cell wall biogenesis; peptidoglycan biosynthesis. Its function is as follows. Cell wall formation. The chain is D-alanine--D-alanine ligase from Pseudothermotoga lettingae (strain ATCC BAA-301 / DSM 14385 / NBRC 107922 / TMO) (Thermotoga lettingae).